A 286-amino-acid polypeptide reads, in one-letter code: Large ribosomal subunit protein uL2 (286 aa).

2 disordered regions span residues Lys-22–His-59 and Leu-215–Lys-286. The span at Asp-230 to Thr-240 shows a compositional bias: basic and acidic residues. Over residues Lys-255–Lys-286 the composition is skewed to basic residues.

This sequence belongs to the universal ribosomal protein uL2 family. As to quaternary structure, part of the 50S ribosomal subunit. Forms a bridge to the 30S subunit in the 70S ribosome.

In terms of biological role, one of the primary rRNA binding proteins. Required for association of the 30S and 50S subunits to form the 70S ribosome, for tRNA binding and peptide bond formation. It has been suggested to have peptidyltransferase activity; this is somewhat controversial. Makes several contacts with the 16S rRNA in the 70S ribosome. The protein is Large ribosomal subunit protein uL2 of Rhodopirellula baltica (strain DSM 10527 / NCIMB 13988 / SH1).